The following is a 197-amino-acid chain: dITP/XTP pyrophosphatase (197 aa).

11–16 (SHNAGK) is a binding site for substrate. Positions 42 and 71 each coordinate Mg(2+). Asp-71 acts as the Proton acceptor in catalysis. Substrate-binding positions include Ser-72, 155 to 158 (FGYD), Lys-178, and 183 to 184 (HR).

This sequence belongs to the HAM1 NTPase family. Homodimer. It depends on Mg(2+) as a cofactor.

The catalysed reaction is XTP + H2O = XMP + diphosphate + H(+). It catalyses the reaction dITP + H2O = dIMP + diphosphate + H(+). The enzyme catalyses ITP + H2O = IMP + diphosphate + H(+). Its function is as follows. Pyrophosphatase that catalyzes the hydrolysis of nucleoside triphosphates to their monophosphate derivatives, with a high preference for the non-canonical purine nucleotides XTP (xanthosine triphosphate), dITP (deoxyinosine triphosphate) and ITP. Seems to function as a house-cleaning enzyme that removes non-canonical purine nucleotides from the nucleotide pool, thus preventing their incorporation into DNA/RNA and avoiding chromosomal lesions. In Pseudomonas aeruginosa (strain ATCC 15692 / DSM 22644 / CIP 104116 / JCM 14847 / LMG 12228 / 1C / PRS 101 / PAO1), this protein is dITP/XTP pyrophosphatase.